The following is a 469-amino-acid chain: 3-isopropylmalate dehydratase large subunit (469 aa).

[4Fe-4S] cluster is bound by residues C347, C410, and C413.

The protein belongs to the aconitase/IPM isomerase family. LeuC type 1 subfamily. Heterodimer of LeuC and LeuD. Requires [4Fe-4S] cluster as cofactor.

It catalyses the reaction (2R,3S)-3-isopropylmalate = (2S)-2-isopropylmalate. It functions in the pathway amino-acid biosynthesis; L-leucine biosynthesis; L-leucine from 3-methyl-2-oxobutanoate: step 2/4. Catalyzes the isomerization between 2-isopropylmalate and 3-isopropylmalate, via the formation of 2-isopropylmaleate. The protein is 3-isopropylmalate dehydratase large subunit of Burkholderia vietnamiensis (strain G4 / LMG 22486) (Burkholderia cepacia (strain R1808)).